A 391-amino-acid polypeptide reads, in one-letter code: Superoxide dismutase [Fe] 1, chloroplastic (391 aa).

The transit peptide at 1–73 (MAFATLVGVG…GESTNSRVLQ (73 aa)) directs the protein to the chloroplast. The span at 87–119 (VNDGIDDETASDAEMDEDAEANGDESSGTDEDA) shows a compositional bias: acidic residues. The disordered stretch occupies residues 87-120 (VNDGIDDETASDAEMDEDAEANGDESSGTDEDAS). 4 residues coordinate Fe cation: histidine 148, histidine 202, aspartate 301, and histidine 305. The interval 370–391 (MPQQVNGDAREQTSGQEKSLGV) is disordered. Residues 381-391 (QTSGQEKSLGV) are compositionally biased toward polar residues.

It belongs to the iron/manganese superoxide dismutase family. In terms of assembly, homodimer. Fe cation is required as a cofactor.

The protein localises to the plastid. Its subcellular location is the chloroplast. It catalyses the reaction 2 superoxide + 2 H(+) = H2O2 + O2. Functionally, destroys superoxide anion radicals which are normally produced within the cells and which are toxic to biological systems. The protein is Superoxide dismutase [Fe] 1, chloroplastic of Oryza sativa subsp. japonica (Rice).